A 148-amino-acid chain; its full sequence is 3-hydroxyacyl-[acyl-carrier-protein] dehydratase FabZ (148 aa).

His50 is a catalytic residue.

This sequence belongs to the thioester dehydratase family. FabZ subfamily.

Its subcellular location is the cytoplasm. The catalysed reaction is a (3R)-hydroxyacyl-[ACP] = a (2E)-enoyl-[ACP] + H2O. Its function is as follows. Involved in unsaturated fatty acids biosynthesis. Catalyzes the dehydration of short chain beta-hydroxyacyl-ACPs and long chain saturated and unsaturated beta-hydroxyacyl-ACPs. This Levilactobacillus brevis (strain ATCC 367 / BCRC 12310 / CIP 105137 / JCM 1170 / LMG 11437 / NCIMB 947 / NCTC 947) (Lactobacillus brevis) protein is 3-hydroxyacyl-[acyl-carrier-protein] dehydratase FabZ.